The sequence spans 433 residues: Trigger factor (433 aa).

The region spanning 163–248 is the PPIase FKBP-type domain; it reads GNFVVIDFVG…VKEAKVKELP (86 aa).

The protein belongs to the FKBP-type PPIase family. Tig subfamily.

Its subcellular location is the cytoplasm. It carries out the reaction [protein]-peptidylproline (omega=180) = [protein]-peptidylproline (omega=0). Its function is as follows. Involved in protein export. Acts as a chaperone by maintaining the newly synthesized protein in an open conformation. Functions as a peptidyl-prolyl cis-trans isomerase. The protein is Trigger factor of Geobacter metallireducens (strain ATCC 53774 / DSM 7210 / GS-15).